The sequence spans 542 residues: Chaperonin GroEL 3 (542 aa).

Residues 29–32, 86–90, Gly-413, 477–479, and Asp-493 contribute to the ATP site; these read TLGP, DGTTT, and NAA.

The protein belongs to the chaperonin (HSP60) family. As to quaternary structure, forms a cylinder of 14 subunits composed of two heptameric rings stacked back-to-back. Interacts with the co-chaperonin GroES.

The protein resides in the cytoplasm. It catalyses the reaction ATP + H2O + a folded polypeptide = ADP + phosphate + an unfolded polypeptide.. Its function is as follows. Together with its co-chaperonin GroES, plays an essential role in assisting protein folding. The GroEL-GroES system forms a nano-cage that allows encapsulation of the non-native substrate proteins and provides a physical environment optimized to promote and accelerate protein folding. The protein is Chaperonin GroEL 3 of Frankia alni (strain DSM 45986 / CECT 9034 / ACN14a).